We begin with the raw amino-acid sequence, 133 residues long: UPF0292 protein TON_0187 (133 aa).

Positions 20–100 (EGAIIVEGPR…RVDSETRKEL (81 aa)) constitute a Toprim domain. Residues E26, D69, and D71 each contribute to the Mg(2+) site.

The protein belongs to the UPF0292 family. Mg(2+) is required as a cofactor.

This Thermococcus onnurineus (strain NA1) protein is UPF0292 protein TON_0187.